A 426-amino-acid polypeptide reads, in one-letter code: 3-phosphoshikimate 1-carboxyvinyltransferase (426 aa).

Lysine 20, serine 21, and arginine 25 together coordinate 3-phosphoshikimate. Residue lysine 20 participates in phosphoenolpyruvate binding. Positions 92 and 120 each coordinate phosphoenolpyruvate. Residues serine 165, glutamine 167, aspartate 313, and lysine 340 each contribute to the 3-phosphoshikimate site. Glutamine 167 is a binding site for phosphoenolpyruvate. Aspartate 313 acts as the Proton acceptor in catalysis. Residues arginine 344 and arginine 386 each coordinate phosphoenolpyruvate.

The protein belongs to the EPSP synthase family. In terms of assembly, monomer.

It localises to the cytoplasm. It catalyses the reaction 3-phosphoshikimate + phosphoenolpyruvate = 5-O-(1-carboxyvinyl)-3-phosphoshikimate + phosphate. The protein operates within metabolic intermediate biosynthesis; chorismate biosynthesis; chorismate from D-erythrose 4-phosphate and phosphoenolpyruvate: step 6/7. Its function is as follows. Catalyzes the transfer of the enolpyruvyl moiety of phosphoenolpyruvate (PEP) to the 5-hydroxyl of shikimate-3-phosphate (S3P) to produce enolpyruvyl shikimate-3-phosphate and inorganic phosphate. This Brevibacillus brevis (strain 47 / JCM 6285 / NBRC 100599) protein is 3-phosphoshikimate 1-carboxyvinyltransferase.